A 45-amino-acid chain; its full sequence is Putative potassium channel blocker (45 aa).

In terms of tissue distribution, expressed by the venom gland.

It is found in the secreted. In terms of biological role, inhibits potassium channels. The polypeptide is Putative potassium channel blocker (Hottentotta tamulus (Eastern Indian scorpion)).